The sequence spans 703 residues: Metastasis-associated protein MTA1 (703 aa).

The BAH domain maps to 1–164 (MAANMYRVGD…PQQKTLLADK (164 aa)). In terms of domain architecture, ELM2 spans 165–276 (GEIRVGNRYQ…KAISALVPQG (112 aa)). A Glycyl lysine isopeptide (Lys-Gly) (interchain with G-Cter in ubiquitin) cross-link involves residue Lys-182. The 53-residue stretch at 283–335 (DEMEEWSASEANLFEEALEKYGKDFTDIQQDFLPWKSLTSIIEYYYMWKTTDR) folds into the SANT domain. Phosphoserine is present on Ser-386. The segment at 393-420 (CESCYTTQSYQWYSWGPPNMQCRLCASC) adopts a GATA-type; atypical zinc-finger fold. The segment at 437 to 460 (DGERPGPNRNNMSPHGIPARSSGS) is disordered. Position 449 is a phosphoserine (Ser-449). Lys-509 participates in a covalent cross-link: Glycyl lysine isopeptide (Lys-Gly) (interchain with G-Cter in SUMO2 and SUMO3). Ser-522 carries the post-translational modification Phosphoserine. Residues 542-552 (ETHPRPPKPDP) show a composition bias toward basic and acidic residues. Residues 542–583 (ETHPRPPKPDPVKSSSSVLSSLTPAKSAPVINNGSPTILGKR) are disordered. The SH3-binding signature appears at 545–552 (PRPPKPDP). Lys-549 is covalently cross-linked (Glycyl lysine isopeptide (Lys-Gly) (interchain with G-Cter in SUMO2)). Low complexity predominate over residues 553-565 (VKSSSSVLSSLTP). Thr-564 bears the Phosphothreonine mark. Ser-576 is modified (phosphoserine). At Thr-578 the chain carries Phosphothreonine. Lys-614 carries the N6-acetyllysine; alternate modification. Residue Lys-614 forms a Glycyl lysine isopeptide (Lys-Gly) (interchain with G-Cter in ubiquitin); alternate linkage. Ser-627 carries the phosphoserine modification. Residues 644–674 (DVFYMATEETRKIRKLLSSSETKRAARRPYK) are interaction with RBBP4. Residues 661 to 703 (SSSETKRAARRPYKPIALRQSQALPLRPPPPAPVNDEPIVIED) form a disordered region. The SH3-binding signature appears at 684 to 693 (LPLRPPPPAP). The SUMO interaction motif 1 (SIM); crucial for efficient sumoylation signature appears at 699–703 (IVIED).

This sequence belongs to the metastasis-associated protein family. As to quaternary structure, component of the nucleosome remodeling and deacetylase (NuRD) repressor complex, composed of core proteins MTA1, MTA2, MTA3, RBBP4, RBBP7, HDAC1, HDAC2, MBD2, MBD3, and peripherally associated proteins CDK2AP1, CDK2AP2, GATAD2A, GATAD2B, CHD3, CHD4 and CHD5. The exact stoichiometry of the NuRD complex is unknown, and some subunits such as MBD2 and MBD3, GATAD2A and GATAD2B, and CHD3, CHD4 and CHD5 define mutually exclusive NuRD complexes. Interacts with RBBP4; the interaction is direct. Interacts with BMAL1. Interacts with CLOCK. Interacts with COP1. Interacts with CSNK1G2 in the cytoplasm. Interacts with EP300. Interacts with HDAC2. Interacts with ITGB3BP/CENPR. Interacts with MBD3L2. Interacts with MDM2. Interacts with NACC2. Interacts with p53/TP53. Interacts with PIAS1. Interacts with PIAS3. Interacts with PIAS4. Interacts with PWWP2A. Interacts with PWWP2B. Interacts with SENP1. Interacts with SENP2. Interacts with SIX3; facilitates the binding of SIX3 to the core DNA motif of SIX3 promoter. Interacts with SUMO1. Interacts with SUMO2. Interacts with TFCP2L1; which is indispensable for TFCP2L1-mediated self-renewal-promoting effect and endoderm-inhibiting action. Interacts with TFAP2C. Interacts with TPR. Interacts with UBE2I/UBC9. Post-translationally, phosphorylation by CSNK1G2/CK1 triggered by estrogen enhances corepression of estrogen receptor (ER). Acetylation is essential for its transcriptional coactivator activity. In terms of processing, sumoylation positively regulates its transcriptional corepressor activity but does not affect the protein stability. Sumoylated preferentially by SUMO2 or SUMO3 than SUMO1. Sumoylation is enhanced by PIAS1/3/4 and preferentially sumoylated by SUMO2 in the presence of PIAS1/3/4. Desumoylated by SENP1. Post-translationally, ubiquitinated by COP1, which leads to proteasomal degradation. In terms of tissue distribution, isoform 1 abundant in testis and expressed at low levels in brain, heart, lung, liver, and kidney. Isoform 2 abundant in adrenal gland, brain, colon, heart, liver, lung, muscle, prostate, stomach, testis, and thymus and expressed at low levels in duodenum, kidney, pancreas, parotid, and spleen.

The protein localises to the nucleus. It localises to the nucleus envelope. It is found in the cytoplasm. The protein resides in the cytoskeleton. Its subcellular location is the rough endoplasmic reticulum. The protein localises to the golgi apparatus. It localises to the zymogen granule. Transcriptional coregulator which can act as both a transcriptional corepressor and coactivator. Acts as a component of the histone deacetylase NuRD complex which participates in the remodeling of chromatin. In the NuRD complex, regulates transcription of its targets by modifying the acetylation status of the target chromatin and cofactor accessibility to the target DNA. In conjunction with other components of NuRD, acts as a transcriptional corepressor of BRCA1, ESR1, TFF1 and CDKN1A. Acts as a transcriptional coactivator of BCAS3, and SUMO2, independent of the NuRD complex. Stimulates the expression of WNT1 by inhibiting the expression of its transcriptional corepressor SIX3. Regulates p53-dependent and -independent DNA repair processes following genotoxic stress. Regulates the stability and function of p53/TP53 by inhibiting its ubiquitination by COP1 and MDM2 thereby regulating the p53-dependent DNA repair. Plays a role in the regulation of the circadian clock and is essential for the generation and maintenance of circadian rhythms under constant light and for normal entrainment of behavior to light-dark (LD) cycles. Positively regulates the CLOCK-BMAL1 heterodimer mediated transcriptional activation of its own transcription and the transcription of CRY1. Regulates deacetylation of BMAL1 by regulating SIRT1 expression, resulting in derepressing CRY1-mediated transcription repression. With TFCP2L1, promotes establishment and maintenance of pluripotency in embryonic stem cells (ESCs) and inhibits endoderm differentiation. This is Metastasis-associated protein MTA1 (Mta1) from Rattus norvegicus (Rat).